Reading from the N-terminus, the 367-residue chain is NADH-quinone oxidoreductase subunit D (367 aa).

It belongs to the complex I 49 kDa subunit family. NDH-1 is composed of 14 different subunits. Subunits NuoB, C, D, E, F, and G constitute the peripheral sector of the complex.

Its subcellular location is the cell membrane. The catalysed reaction is a quinone + NADH + 5 H(+)(in) = a quinol + NAD(+) + 4 H(+)(out). Functionally, NDH-1 shuttles electrons from NADH, via FMN and iron-sulfur (Fe-S) centers, to quinones in the respiratory chain. The immediate electron acceptor for the enzyme in this species is believed to be ubiquinone. Couples the redox reaction to proton translocation (for every two electrons transferred, four hydrogen ions are translocated across the cytoplasmic membrane), and thus conserves the redox energy in a proton gradient. The protein is NADH-quinone oxidoreductase subunit D of Dehalococcoides mccartyi (strain CBDB1).